Reading from the N-terminus, the 630-residue chain is FAST kinase domain-containing protein 4 (630 aa).

Residues 560 to 618 (IAFLRWEFPNFNSRSKDLLGRFVLARRHVLAAGFLVVDVPYYEWLDLKSEWQKSAYLKD) form the RAP domain.

The protein belongs to the FAST kinase family. As to expression, expression detected in spleen, testis, colon, heart, smooth muscle, kidney, brain, lung, liver, brown and white adipose tissue with highest expression in testis, heart, smooth muscle and brown adipose tissue.

It localises to the mitochondrion matrix. In terms of biological role, plays a role in processing of mitochondrial RNA precursors and in stabilization of a subset of mature mitochondrial RNA species, such as MT-CO1, MT-CO2, MT-CYB, MT-CO3, MT-ND3, MT-ND5 and MT-ATP8/6. May play a role in cell cycle progression. The sequence is that of FAST kinase domain-containing protein 4 (Tbrg4) from Mus musculus (Mouse).